The following is a 348-amino-acid chain: Histone PARylation factor 1 (348 aa).

A compositionally biased stretch (basic residues) spans 1-10 (MAGRGKRKPR). Residues 1–38 (MAGRGKRKPRSLPQTETPNGEVKKAKEGLKDDKTSVGE) are disordered. Basic and acidic residues predominate over residues 21–38 (EVKKAKEGLKDDKTSVGE). Positions 170–200 (LQKKKKEKRQQKDDAALNRLEEDLKREAERL) form a coiled coil. The active-site Proton donor is the Glu285.

Belongs to the HPF1 family. As to quaternary structure, interacts with PARP1 (via the PARP catalytic domain). Interacts with PARP2 (via the PARP catalytic domain). Interacts with core nucleosomes in a parp1- and parp2-dependent manner. In adult, mainly expressed in gonads.

It localises to the chromosome. The protein resides in the nucleus. Functionally, cofactor for serine ADP-ribosylation that confers serine specificity on parp1 and parp2 and plays a key role in DNA damage response. Initiates the repair of double-strand DNA breaks: recruited to DNA damage sites by parp1 and parp2 and switches the amino acid specificity of parp1 and parp2 from aspartate or glutamate to serine residues, licensing serine ADP-ribosylation of target proteins. Serine ADP-ribosylation of target proteins, such as histones, promotes decompaction of chromatin and the recruitment of repair factors leading to the reparation of DNA strand breaks. Serine ADP-ribosylation of proteins constitutes the primary form of ADP-ribosylation of proteins in response to DNA damage. Hpf1 acts by completing the active site of parp1 and parp2: forms a composite active site composed of residues from Hpf1 and parp1 or parp2. While hpf1 promotes the initiation of serine ADP-ribosylation, it restricts the polymerase activity of parp1 and parp2 in order to limit the length of poly-ADP-ribose chains. Hpf1 also promotes tyrosine ADP-ribosylation, probably by conferring tyrosine specificity on parp1. This Danio rerio (Zebrafish) protein is Histone PARylation factor 1.